Reading from the N-terminus, the 144-residue chain is Large ribosomal subunit protein uL15 (144 aa).

Positions 1–58 are disordered; it reads MNLSNLRAPRKANEKKKRVGRGMGSGMGKTSARGHKGQRSRSGSRMMRGFEGGQMPLH. The segment covering 8 to 20 has biased composition (basic residues); sequence APRKANEKKKRVG. Low complexity predominate over residues 40–49; the sequence is SRSGSRMMRG.

The protein belongs to the universal ribosomal protein uL15 family. As to quaternary structure, part of the 50S ribosomal subunit.

In terms of biological role, binds to the 23S rRNA. The sequence is that of Large ribosomal subunit protein uL15 from Koribacter versatilis (strain Ellin345).